We begin with the raw amino-acid sequence, 596 residues long: MVDIMCNDSTGVSLVKNIYPILDDLFSVFSSVDFVLQPTHTGILIIWIKREMVIPVLTFLKTTSKPYIMLYDLHGIDERLRIHREGLPESDFTVFYHLISILRNDDIIIKVPLLEQSLYIDTVVSVFANANWYERETWEMFGIHFNKHPNLTRIIMPKNWNGYPLRKEYPARATEFNPFILTKQKEDLAMEGLLFKPEEWGMHKHSKHENFMFLNLGPNHPSVHGVFRIILQLNGEEIIDCVPDIGYHHRGAEKMGERQTWHSYIPYTDRIEYLGGCVNEMPYILAVEKLAGITVPDRVKVIRIMLSELFRINSHLLYISTYLQDVGAMSPVFLAFTDRQKIYDVIESITGSRMHPAWFRIGGVAHDLPRGWECLLRKCLDWIPHRVSFYVKSTLENSIFKKRACGIGAYNAKDALDWGVTGAGLRATGIEFDIRKSRPYSGYENFDFDVPIGNGISDSYSRVMLKVEEIYQSVRILEQCLQNMPIGPFKSDHPLATPPMKEYALQHIETLITHFLQVSWGPVIPANESFQMIEATKGINSYYLISDGNTMSYRTRIRTPSFPHLQQIPHVIRGSLISDLIVYLGSIDFVMSDVDR.

Residues 1 to 186 (MVDIMCNDST…NPFILTKQKE (186 aa)) are NADH dehydrogenase I subunit C. Residues 210 to 596 (NFMFLNLGPN…IDFVMSDVDR (387 aa)) are NADH dehydrogenase I subunit D.

This sequence in the N-terminal section; belongs to the complex I 30 kDa subunit family. The protein in the C-terminal section; belongs to the complex I 49 kDa subunit family. NDH-1 is composed of 13 different subunits. Subunits NuoB, CD, E, F, and G constitute the peripheral sector of the complex.

The protein resides in the cell inner membrane. It catalyses the reaction a quinone + NADH + 5 H(+)(in) = a quinol + NAD(+) + 4 H(+)(out). In terms of biological role, NDH-1 shuttles electrons from NADH, via FMN and iron-sulfur (Fe-S) centers, to quinones in the respiratory chain. The immediate electron acceptor for the enzyme in this species is believed to be ubiquinone. Couples the redox reaction to proton translocation (for every two electrons transferred, four hydrogen ions are translocated across the cytoplasmic membrane), and thus conserves the redox energy in a proton gradient. The protein is NADH-quinone oxidoreductase subunit C/D of Blochmanniella pennsylvanica (strain BPEN).